Consider the following 345-residue polypeptide: Beta-2-glycoprotein 1 (345 aa).

A signal peptide spans 1–19 (MISPVLILFSSFLCHVAIA). 4 consecutive Sushi domains span residues 21-81 (RTCP…KCTP), 82-139 (RVCP…VCAP), 140-202 (ITCP…ECRE), and 203-262 (VKCP…SCKA). Intrachain disulfides connect Cys23/Cys66, Cys51/Cys79, Cys84/Cys124, Cys110/Cys137, Cys142/Cys188, Cys174/Cys200, Cys205/Cys248, Cys234/Cys260, Cys264/Cys315, Cys300/Cys325, and Cys307/Cys345. Thr33 is a glycosylation site (O-linked (GalNAc...) threonine). A glycan (O-linked (GalNAc...) threonine) is linked at Thr149. N-linked (GlcNAc...) asparagine glycosylation is found at Asn162, Asn183, and Asn193. Asn253 carries an N-linked (GlcNAc...) asparagine glycan. Residues 263 to 345 (SCKVPVKKAT…KTDASDVKPC (83 aa)) are sushi-like.

Expressed by the liver and secreted in plasma.

It is found in the secreted. Its function is as follows. Binds to various kinds of negatively charged substances such as heparin, phospholipids, and dextran sulfate. May prevent activation of the intrinsic blood coagulation cascade by binding to phospholipids on the surface of damaged cells. The polypeptide is Beta-2-glycoprotein 1 (APOH) (Pan troglodytes (Chimpanzee)).